The following is a 75-amino-acid chain: SPbeta prophage-derived uncharacterized protein YomT (75 aa).

This is SPbeta prophage-derived uncharacterized protein YomT (yomT) from Bacillus subtilis (strain 168).